The following is a 219-amino-acid chain: Protein-L-isoaspartate O-methyltransferase (219 aa).

The active site involves Ser67.

It belongs to the methyltransferase superfamily. L-isoaspartyl/D-aspartyl protein methyltransferase family.

The protein resides in the cytoplasm. The enzyme catalyses [protein]-L-isoaspartate + S-adenosyl-L-methionine = [protein]-L-isoaspartate alpha-methyl ester + S-adenosyl-L-homocysteine. Functionally, catalyzes the methyl esterification of L-isoaspartyl residues in peptides and proteins that result from spontaneous decomposition of normal L-aspartyl and L-asparaginyl residues. It plays a role in the repair and/or degradation of damaged proteins. The chain is Protein-L-isoaspartate O-methyltransferase from Cereibacter sphaeroides (strain ATCC 17029 / ATH 2.4.9) (Rhodobacter sphaeroides).